Reading from the N-terminus, the 177-residue chain is Protein C2-DOMAIN ABA-RELATED 4 (177 aa).

The C2 domain occupies alanine 4 to serine 118. Residues arginine 33, aspartate 34, aspartate 39, aspartate 85, histidine 86, aspartate 87, and aspartate 93 each coordinate Ca(2+).

It belongs to the plant CAR protein family. Dimers and oligomers. Binds to PYR/PYL/RCAR abscisic acid intracellular receptors in an ABA-independent manner, both at the plasma membrane and in the nucleus. Interacts directly with PYR1, PYL1, PYL4, PYL6 and PYL8. Binds phospholipids in a Ca(2+)-dependent manner. Interacts with YchF1. Ca(2+) serves as cofactor.

The protein localises to the cell membrane. The protein resides in the nucleus. It is found in the cytoplasm. It localises to the cytosol. In terms of biological role, mediates the transient calcium-dependent interaction of PYR/PYL/RCAR abscisic acid (ABA) receptors with the plasma membrane and thus regulates ABA sensitivity. Stimulates the GTPase/ATPase activities of YchF1, and regulates its subcellular localization. Promotes tolerance towards salinity stress by limiting the accumulation of reactive oxygen species (ROS). Promotes resistance to bacterial pathogens (e.g. Xanthomonas oryzae pv. oryzae and P.syringae pv. tomato DC3000). Binds liposomes in the absence of exogenous Ca(2+), but this activity is enhanced in the presence of Ca(2+) and generates membrane curvature. In Arabidopsis thaliana (Mouse-ear cress), this protein is Protein C2-DOMAIN ABA-RELATED 4.